The primary structure comprises 165 residues: Ribosome maturation factor RimM (165 aa).

One can recognise a PRC barrel domain in the interval 90 to 161; it reads PDTYYVSDLK…KIIIKPVGEW (72 aa).

The protein belongs to the RimM family. As to quaternary structure, binds ribosomal protein uS19.

The protein localises to the cytoplasm. In terms of biological role, an accessory protein needed during the final step in the assembly of 30S ribosomal subunit, possibly for assembly of the head region. Essential for efficient processing of 16S rRNA. May be needed both before and after RbfA during the maturation of 16S rRNA. It has affinity for free ribosomal 30S subunits but not for 70S ribosomes. This chain is Ribosome maturation factor RimM, found in Clostridium beijerinckii (strain ATCC 51743 / NCIMB 8052) (Clostridium acetobutylicum).